We begin with the raw amino-acid sequence, 298 residues long: Protease HtpX homolog (298 aa).

Transmembrane regions (helical) follow at residues 14 to 34 (VVLL…AGYL) and 39 to 59 (YAMG…SMIF). H143 serves as a coordination point for Zn(2+). The active site involves E144. H147 contributes to the Zn(2+) binding site. 2 consecutive transmembrane segments (helical) span residues 158-178 (IAVA…RMLW) and 197-217 (IITL…ASLI). E226 lines the Zn(2+) pocket.

Belongs to the peptidase M48B family. Zn(2+) serves as cofactor.

It localises to the cell membrane. This is Protease HtpX homolog from Streptococcus pyogenes serotype M6 (strain ATCC BAA-946 / MGAS10394).